A 485-amino-acid polypeptide reads, in one-letter code: Carbohydrate sulfotransferase 7 (485 aa).

The Cytoplasmic segment spans residues 1–12; that stretch reads MKGRRRRRREYC. A helical; Signal-anchor for type II membrane protein transmembrane segment spans residues 13–33; that stretch reads KFTLLLALYTLLLLLVPSVLD. At 34 to 485 the chain is on the lumenal side; that stretch reads SGSEQDKGGR…PLETNANWAT (452 aa). Residues 66–88 are disordered; that stretch reads EQGAEVRFQAEGNPDRSPRPQGN. The N-linked (GlcNAc...) asparagine glycan is linked to asparagine 88. 109–115 is a binding site for 3'-phosphoadenylyl sulfate; sequence WRTGSSF. Asparagine 185 carries an N-linked (GlcNAc...) asparagine glycan. Residue 277–285 participates in 3'-phosphoadenylyl sulfate binding; that stretch reads RDPRAVHNS. Asparagine 406 carries an N-linked (GlcNAc...) asparagine glycan. The residue at position 461 (serine 461) is a Phosphoserine. The span at 465 to 475 shows a compositional bias: basic and acidic residues; sequence RDVKTVRKGET. The tract at residues 465 to 485 is disordered; that stretch reads RDVKTVRKGETPLETNANWAT.

This sequence belongs to the sulfotransferase 1 family. Gal/GlcNAc/GalNAc subfamily.

It is found in the golgi apparatus membrane. It catalyses the reaction chondroitin beta-D-glucuronate + n 3'-phosphoadenylyl sulfate = chondroitin 6'-sulfate + n adenosine 3',5'-bisphosphate + n H(+). Sulfotransferase that utilizes 3'-phospho-5'-adenylyl sulfate (PAPS) as sulfonate donor to catalyze the transfer of sulfate to position 6 of non-reducing N-acetylglucosamine (GlcNAc) residues. Preferentially acts on mannose-linked GlcNAc. Also able to catalyze the transfer of sulfate to position 6 of the N-acetylgalactosamine (GalNAc) residue of chondroitin. Also acts on core 2 mucin-type oligosaccharide and N-acetyllactosamine oligomer with a lower efficiency. Has weak or no activity toward keratan sulfate and oligosaccharides containing the Galbeta1-4GlcNAc. Catalyzes 6-O-sulfation of beta-benzyl GlcNAc but not alpha- or beta-benzyl GalNAc. This is Carbohydrate sulfotransferase 7 (Chst7) from Rattus norvegicus (Rat).